Here is a 288-residue protein sequence, read N- to C-terminus: MKKLSFQQIILTLQNYWQDYGCAILQPYDAHVGAGTFHPATVLRCLGTKPWSVAYVQPSRRPGDSRYGMHPNRMQHYYQFQVILKPSPDNIQELYLKSLECLGIDLKIHDIRFVEDDWESPTLGAAGLGWEVWCNGMEVSQFTYMQQIGGIECRPVAGEITYGLERLALYIQGVDEVRELDWSGQVGEKALKYGEVDFEAEGQFSKYNLELADSEMLLRHFKDSEDQCERLIKANLPMPAYDECLKASHAFNQLNALGVISVTERASYVLRVRHLARICCTKWLEMNK.

Belongs to the class-II aminoacyl-tRNA synthetase family. In terms of assembly, tetramer of two alpha and two beta subunits.

Its subcellular location is the cytoplasm. The catalysed reaction is tRNA(Gly) + glycine + ATP = glycyl-tRNA(Gly) + AMP + diphosphate. The sequence is that of Glycine--tRNA ligase alpha subunit from Rickettsia africae (strain ESF-5).